The sequence spans 526 residues: Cytochrome P450 monooxygeanse terK (526 aa).

A helical transmembrane segment spans residues 21-43; it reads NWGQLTGALLFLAACTWIYLPAF. Cysteine 465 serves as a coordination point for heme.

This sequence belongs to the cytochrome P450 family. It depends on heme as a cofactor.

The protein localises to the membrane. It functions in the pathway secondary metabolite biosynthesis. In terms of biological role, cytochrome P450 monooxygeanse; part of the gene cluster that mediates the biosynthesis of terpendoles, indole-diterpene (IDT) mycotoxins including terpendole I, terpendole K, terpendole C, as well as the kinesin Eg5 inhibitor terpendole E. Terpendoles biosynthesis begins with the synthesis of geranylgeranyl diphosphate (GGPP) by a yet unidentified GGPP synthase. Condensation of indole-3-glycerol phosphate with GGPP by the prenyltransferase terC then forms 3-geranylgeranylindole (3-GGI), followed by epoxidation and cyclization of this intermediate (by the FAD-dependent monooxygeanse terM and the terpene cyclase terB) to form paspaline. The cytochrome monooxygenase terQ then hydroxylates paspalline at C-11 to yield terpendole E. The cytochrome monooxygenase terP converts terpendole E to 13-desoxyterpendole I, and terQ converts 13-desoxyterpendole I into terpendole I. TerF and terK are required for conversion of terpendole I to terpendole C which is further converted to terpendole K. The sequence is that of Cytochrome P450 monooxygeanse terK from Tolypocladium album (Soil fungus).